The sequence spans 621 residues: GPI-anchor transamidase component GPAA1 (621 aa).

The Cytoplasmic portion of the chain corresponds to 1-19; it reads MGLLSDPVRRRALARIVLR. Residues 20 to 41 traverse the membrane as a helical segment; the sequence is LNTPLCVLSYVAGIAWFLALAF. At 42 to 370 the chain is on the lumenal side; sequence PPLTQRTYMS…LLPALSRFVS (329 aa). A 2-acyl-6-[6-phosphoethanolamine-alpha-D-mannosyl-(1-&gt;2)-6-phosphoethanolamine-alpha-D-mannosyl-(1-&gt;6)-2-phosphoethanolamine-alpha-D-mannosyl-(1-&gt;4)-alpha-D-glucosaminyl]-1-(1-radyl,2-acyl-sn-glycero-3-phospho)-1D-myo-inositol contacts are provided by Y49 and S51. The N-linked (GlcNAc...) asparagine glycan is linked to N203. A disulfide bridge connects residues C259 and C266. Residues H354, Q355, and S356 each contribute to the a 2-acyl-6-[6-phosphoethanolamine-alpha-D-mannosyl-(1-&gt;2)-6-phosphoethanolamine-alpha-D-mannosyl-(1-&gt;6)-2-phosphoethanolamine-alpha-D-mannosyl-(1-&gt;4)-alpha-D-glucosaminyl]-1-(1-radyl,2-acyl-sn-glycero-3-phospho)-1D-myo-inositol site. Q355 lines the Mg(2+) pocket. A helical transmembrane segment spans residues 371-393; it reads IGLYMPATGFLLLVLGLKALELW. At 394–425 the chain is on the cytoplasmic side; that stretch reads MQLHQAGVNPEEAGKAPSPGTPLLPTQGVGLA. The chain crosses the membrane as a helical span at residues 426–450; that stretch reads SLTAPLLISQAMGLALYFLPVLGQH. At 451-462 the chain is on the lumenal side; sequence LATQHFPVAEAE. The chain crosses the membrane as a helical span at residues 463–483; the sequence is AVVLTLLAIYVAGLALPHNTH. The Cytoplasmic segment spans residues 484–495; it reads RVVNSQVPDRGW. The next 2 membrane-spanning stretches (helical) occupy residues 496–519 and 520–536; these read MALKLVALIYLALQLGCIALLNFS and LGFLLAATMVPAAALAK. At 537–540 the chain is on the cytoplasmic side; sequence PHGP. A helical membrane pass occupies residues 541–563; the sequence is RTLYAALLVVTSPAVTLFGSLFL. The Lumenal portion of the chain corresponds to 564 to 597; it reads WRELLEVPLSLAEGWQLFLTALAQGVLEHYTYGA. The helical transmembrane segment at 598 to 619 threads the bilayer; that stretch reads LLFPILALGLYPCWLLFWNVLF. At 620–621 the chain is on the cytoplasmic side; that stretch reads WK.

In terms of assembly, heteropentamer. Part of the GPI-anchor transamidase complex, consisting of PIGK, PIGT, PIGS, PIGU and GAA1. Interacts with PIGK. In terms of tissue distribution, ubiquitously expressed in fetal and adult tissues. Expressed at higher levels in fetal tissues than adult tissues. In embryos abundant in the choroid plexus, skeletal muscle,.

The protein localises to the endoplasmic reticulum membrane. The protein operates within glycolipid biosynthesis; glycosylphosphatidylinositol-anchor biosynthesis. Its function is as follows. Component of the glycosylphosphatidylinositol-anchor (GPI-anchor) transamidase (GPI-T) complex that catalyzes the formation of the linkage between a proprotein and a GPI-anchor and participates in GPI anchored protein biosynthesis. Binds GPI-anchor. In Mus musculus (Mouse), this protein is GPI-anchor transamidase component GPAA1.